Consider the following 95-residue polypeptide: MPRSLKKGPFVDDHLLKKVDAQNERKDKRVIKTWSRRSTIVPEMIGHTIAVHNGKQHVPVFVNEQMIGHKLGEFSPTRSYRGHGADKNAKGSKKK.

Residues 73–95 form a disordered region; it reads EFSPTRSYRGHGADKNAKGSKKK.

It belongs to the universal ribosomal protein uS19 family.

Protein S19 forms a complex with S13 that binds strongly to the 16S ribosomal RNA. This chain is Small ribosomal subunit protein uS19, found in Deinococcus deserti (strain DSM 17065 / CIP 109153 / LMG 22923 / VCD115).